The following is a 395-amino-acid chain: Probable alcohol dehydrogenase EutG (395 aa).

Residues D57, 116–120, 156–160, K178, and 197–201 contribute to the NAD(+) site; these read GSVLD, TTAGT, and VTEGV. D212, H216, H281, and H295 together coordinate Fe cation. NAD(+)-binding residues include H295 and D354.

The protein belongs to the iron-containing alcohol dehydrogenase family. It depends on Fe cation as a cofactor.

Its subcellular location is the bacterial microcompartment. The catalysed reaction is ethanol + NAD(+) = acetaldehyde + NADH + H(+). It functions in the pathway amine and polyamine degradation; ethanolamine degradation. Probably acts on the acetaldehyde produced by the degradation of ethanolamine, producing ethanol. In terms of biological role, expression of the eut operon allows this bacteria to use ethanolamine (EA) as a carbon, nitrogen and energy source. It relies on cobalamin (vitamin B12) both as a cofactor for the ethanolamine ammonia-lyase (EAL) activity and to induce the operon. EA enhances bacterial survival in macrophages in a concentration-dependent manner, suggesting it is an important nutrient during infection. This is Probable alcohol dehydrogenase EutG from Salmonella typhimurium (strain LT2 / SGSC1412 / ATCC 700720).